The following is a 198-amino-acid chain: Superoxide dismutase [Fe] (198 aa).

The Fe cation site is built by histidine 27, histidine 74, aspartate 158, and histidine 162.

The protein belongs to the iron/manganese superoxide dismutase family. In terms of assembly, homodimer. Fe cation is required as a cofactor.

It is found in the cytoplasm. The enzyme catalyses 2 superoxide + 2 H(+) = H2O2 + O2. Its function is as follows. Destroys superoxide anion radicals which are normally produced within the cells and which are toxic to biological systems. This Plasmodium falciparum (isolate HB3) protein is Superoxide dismutase [Fe] (SODB).